The sequence spans 478 residues: Sphingomyelin synthase-related protein 1 (478 aa).

The segment covering 1–22 has biased composition (low complexity); it reads MPAGSRAGSRLRSGSLPRPSRL. The segment at 1-65 is disordered; the sequence is MPAGSRAGSR…TAEEVEKEMA (65 aa). Residues 75 to 141 enclose the SAM domain; sequence WTTKHVAVWL…MLSVRKLQKI (67 aa). 6 helical membrane passes run 216-236, 264-284, 295-315, 341-361, 385-405, and 410-430; these read ILSC…MVIV, FSMT…VLLL, LCSL…VTSL, AIWS…DYMF, FLHT…LAAH, and IDVF…HTLA. Residues 431–478 are Cytoplasmic-facing; sequence NTRAYHQSRRARIWFPMFSFFECNVNGTVPNEYCWPFSKPAIMKRLIG.

Belongs to the sphingomyelin synthase family. As to expression, expressed ubiquitously with highest levels in macrophages and testis.

It localises to the endoplasmic reticulum membrane. It carries out the reaction an N-acylsphing-4-enine + a 1,2-diacyl-sn-glycero-3-phosphoethanolamine = an N-acylsphing-4-enine 1-phosphoethanolamine + a 1,2-diacyl-sn-glycerol. It catalyses the reaction an N-acylsphinganine + a 1,2-diacyl-sn-glycero-3-phosphoethanolamine = an N-acylsphinganine-1-phosphoethanolamine + a 1,2-diacyl-sn-glycerol. The catalysed reaction is an N-acyl-(4R)-4-hydroxysphinganine + a 1,2-diacyl-sn-glycero-3-phosphoethanolamine = an N-acyl-(4R)-4-hydroxysphinganine-1-phosphoethanolamine + a 1,2-diacyl-sn-glycerol. The enzyme catalyses N-hexadecanoylsphinganine + a 1,2-diacyl-sn-glycero-3-phosphoethanolamine = N-hexadecanoyl-sphinganine-1-phosphoethanolamine + a 1,2-diacyl-sn-glycerol. It carries out the reaction N-hexadecanoyl-(4R)-hydroxysphinganine + a 1,2-diacyl-sn-glycero-3-phosphoethanolamine = N-hexadecanoyl-(4R)-hydroxysphinganine-1-phosphoethanolamine + a 1,2-diacyl-sn-glycerol. Its pathway is sphingolipid metabolism. In terms of biological role, synthesizes sphingolipids through transfer of a phosphatidyl head group from a glycerophospholipid on to the primary hydroxyl of a ceramide in the lumen of the endoplasmic reticulum. Catalyzes the synthesis of ceramide phosphoethanolamines (CPEs) (such as N-acylsphing-4-enine 1-phosphoethanolamine) by transferring phosphoethanolamine head group, which is smaller and more hydrophilic than the phosphocholine (PC) headgroup transferred in the canonical sphingomyelin synthesis (SMS) reaction by SMS1 or SMS2, from a phosphatidylethanolamine (1,2-diacyl-sn-glycero-3-phosphoethanolamine, PE) to a ceramide (such as N-acylsphing-4-enine). The larger PC prevents an efficient fit in the enzyme's catalytic pocket, leading to little or no SMS activity. In vitro, in the absence of ceramide, it has PLC activity with preference for phosphatidylinositol and phosphatidic acid, but also hydrolyzes phosphatidylethanolamine. The chain is Sphingomyelin synthase-related protein 1 from Mus musculus (Mouse).